The primary structure comprises 906 residues: Ribonucleoside-diphosphate reductase large subunit-like protein (906 aa).

Disordered stretches follow at residues 1 to 70 (MNPA…AGNT) and 89 to 129 (VSWR…LSTF). The span at 98–109 (PDGTPSVLSLTR) shows a compositional bias: polar residues.

This sequence belongs to the ribonucleoside diphosphate reductase large chain family.

Its subcellular location is the virion. It is found in the host cytoplasm. Does not possess a ribonucleotide reductase activity. Betaherpesviruses probably use another strategy to expand the dNTP pool in a quiescent host cell. The protein is Ribonucleoside-diphosphate reductase large subunit-like protein of Human cytomegalovirus (strain AD169) (HHV-5).